The chain runs to 609 residues: Arginine--tRNA ligase (609 aa).

Positions 132 to 142 match the 'HIGH' region motif; sequence ANPTSSLHVGH.

Belongs to the class-I aminoacyl-tRNA synthetase family. As to quaternary structure, monomer.

Its subcellular location is the cytoplasm. The catalysed reaction is tRNA(Arg) + L-arginine + ATP = L-arginyl-tRNA(Arg) + AMP + diphosphate. The protein is Arginine--tRNA ligase of Psychrobacter sp. (strain PRwf-1).